A 330-amino-acid chain; its full sequence is Ketol-acid reductoisomerase (NADP(+)) (330 aa).

The KARI N-terminal Rossmann domain maps to 1–181; it reads MNAYYEQDAD…GGTKAGVIET (181 aa). NADP(+) is bound by residues 24 to 27, R47, S50, S52, and 82 to 85; these read YGSQ and DQYQ. The active site involves H107. Residue G133 participates in NADP(+) binding. The region spanning 182 to 327 is the KARI C-terminal knotted domain; that stretch reads TFKNETETDL…SKLRDMMSWL (146 aa). 4 residues coordinate Mg(2+): D190, E194, E226, and E230. S251 is a binding site for substrate.

It belongs to the ketol-acid reductoisomerase family. Mg(2+) serves as cofactor.

The enzyme catalyses (2R)-2,3-dihydroxy-3-methylbutanoate + NADP(+) = (2S)-2-acetolactate + NADPH + H(+). It catalyses the reaction (2R,3R)-2,3-dihydroxy-3-methylpentanoate + NADP(+) = (S)-2-ethyl-2-hydroxy-3-oxobutanoate + NADPH + H(+). It functions in the pathway amino-acid biosynthesis; L-isoleucine biosynthesis; L-isoleucine from 2-oxobutanoate: step 2/4. The protein operates within amino-acid biosynthesis; L-valine biosynthesis; L-valine from pyruvate: step 2/4. Involved in the biosynthesis of branched-chain amino acids (BCAA). Catalyzes an alkyl-migration followed by a ketol-acid reduction of (S)-2-acetolactate (S2AL) to yield (R)-2,3-dihydroxy-isovalerate. In the isomerase reaction, S2AL is rearranged via a Mg-dependent methyl migration to produce 3-hydroxy-3-methyl-2-ketobutyrate (HMKB). In the reductase reaction, this 2-ketoacid undergoes a metal-dependent reduction by NADPH to yield (R)-2,3-dihydroxy-isovalerate. The sequence is that of Ketol-acid reductoisomerase (NADP(+)) from Chlorobium limicola (strain DSM 245 / NBRC 103803 / 6330).